Consider the following 144-residue polypeptide: uncharacterized protein (144 aa).

Belongs to the mimivirus L885/R898 family.

This is an uncharacterized protein from Acanthamoeba polyphaga (Amoeba).